A 537-amino-acid chain; its full sequence is Lariat debranching enzyme (537 aa).

The a divalent metal cation site is built by cysteine 8, histidine 10, aspartate 39, and asparagine 84. Residues 124-154 (SGIYKGHDFLRGHHEFPPYTESTCRSVYHVR) form a lariat recognition loop region. Residues histidine 174, histidine 226, and histidine 228 each coordinate a divalent metal cation. 2 disordered regions span residues 242–272 (KAPT…SRLP) and 473–537 (TAAE…EDDD). The span at 251–260 (SSSSSSSSSS) shows a compositional bias: low complexity.

Belongs to the lariat debranching enzyme family. Requires Fe(2+) as cofactor. It depends on Zn(2+) as a cofactor. Mn(2+) is required as a cofactor.

It is found in the nucleus. With respect to regulation, active in presence of diverse metals including Fe(2+), Zn(2+), Mn(2+). Binds two metal cations in two adjacent alpha and beta metal-binding pockets. Its function is as follows. Cleaves the 2'-5' phosphodiester linkage at the branch point of lariat intron pre-mRNAs after splicing and converts them into linear molecules that are subsequently degraded. It thereby facilitates ribonucleotide turnover. The polypeptide is Lariat debranching enzyme (DBR1) (Drosophila pseudoobscura pseudoobscura (Fruit fly)).